We begin with the raw amino-acid sequence, 729 residues long: Golgin subfamily A member 5 (729 aa).

The residue at position 2 (Ser-2) is an N-acetylserine. Over 2 to 696 (SWFADLAGRA…IFLRRYPIAR (695 aa)) the chain is Cytoplasmic. A dimethylated arginine mark is found at Arg-27 and Arg-89. 2 disordered regions span residues 89–222 (RTVG…SQEL) and 626–645 (SASS…VDSG). Ser-116 carries the phosphoserine modification. The span at 134–146 (PTGRVEVKKEKGR) shows a compositional bias: basic and acidic residues. The span at 148–167 (PVSPSSPSGVSSVNTSVTTT) shows a compositional bias: low complexity. Polar residues-rich tracts occupy residues 175–186 (GSQSPGVNSSDS) and 626–638 (SASS…SAIN). Residues 215 to 629 (GSSRSQELSN…LEQQVHSASS (415 aa)) are a coiled coil. A helical; Anchor for type IV membrane protein transmembrane segment spans residues 697 to 717 (VFVIIYMALLHLWVMIVLLTY). The Lumenal portion of the chain corresponds to 718 to 729 (SPEMHHDQPYGK).

In terms of assembly, homodimer. Interacts with RAB1A that has been activated by GTP-binding. Interacts with isoform CASP of CUX1. Post-translationally, highly phosphorylated during mitosis. Phosphorylation is barely detectable during interphase.

It is found in the golgi apparatus membrane. Functionally, involved in maintaining Golgi structure. Stimulates the formation of Golgi stacks and ribbons. Involved in intra-Golgi retrograde transport. The sequence is that of Golgin subfamily A member 5 (Golga5) from Mus musculus (Mouse).